The sequence spans 667 residues: Zeaxanthin epoxidase, chloroplastic (667 aa).

The N-terminal 59 residues, 1 to 59 (MGSTPFCYSINPSPSKLDFTRTHVFSPVSKQFYLDLSSFSGKPGGVSGFRSRRALLGVK), are a transit peptide targeting the chloroplast. FAD is bound by residues 82–110 (RVLV…LVFE) and 360–373 (GFTW…LLGD). One can recognise an FHA domain in the interval 558–612 (CIVGSEPDQDFPGMRIVIPSSQVSKMHARVIYKDGAFFLMDLRSEHGTYVTDNEG).

FAD serves as cofactor. As to expression, expressed in leaves, stems and flowers, and at lower levels in roots and siliques.

Its subcellular location is the plastid. It localises to the chloroplast. It carries out the reaction all-trans-zeaxanthin + 4 reduced [2Fe-2S]-[ferredoxin] + 2 O2 + 4 H(+) = all-trans-violaxanthin + 4 oxidized [2Fe-2S]-[ferredoxin] + 2 H2O. Its pathway is plant hormone biosynthesis; abscisate biosynthesis. In terms of biological role, zeaxanthin epoxidase that plays an important role in the xanthophyll cycle and abscisic acid (ABA) biosynthesis. Converts zeaxanthin into antheraxanthin and subsequently violaxanthin. Required for resistance to osmotic and drought stresses, ABA-dependent stomatal closure, seed development and dormancy, modulation of defense gene expression and disease resistance and non-photochemical quencing (NPQ). Through its role in ABA biosynthesis, regulates the expression of stress-responsive genes such as RD29A during osmotic stress and is required for normal plant growth during vegetative development. Is required for late skotomorphogenic growth through its role in the xanthophyll carotenoids neoxanthin, violaxanthin and antheraxanthin biosynthesis. Required for beta-aminobutyric acid (BABA)-induced priming in disease resistance, tolerance to salt and drought stresses and sterility. Participates in NPQ by regulating the level of zeaxanthin in photosynthetic energy conversion. NPQ is a process that maintains the balance between dissipation and utilization of light energy to minimize the generation of oxidizing molecules and the molecular damages they can generate. The protein is Zeaxanthin epoxidase, chloroplastic (ZEP) of Arabidopsis thaliana (Mouse-ear cress).